The chain runs to 507 residues: Beta-glucosidase 3 (507 aa).

The first 23 residues, 1–23, serve as a signal peptide directing secretion; that stretch reads MELTLSLLTIFLLFFALSGRCSD. Glutamine 41 serves as a coordination point for a beta-D-glucoside. N-linked (GlcNAc...) asparagine glycosylation occurs at asparagine 64. A beta-D-glucoside-binding positions include histidine 138 and 183-184; that span reads NE. Catalysis depends on glutamate 184, which acts as the Proton donor. A disulfide bridge links cysteine 203 with cysteine 210. Asparagine 209 and asparagine 214 each carry an N-linked (GlcNAc...) asparagine glycan. Tyrosine 326 serves as a coordination point for a beta-D-glucoside. Residue asparagine 361 is glycosylated (N-linked (GlcNAc...) asparagine). Glutamate 394 contacts a beta-D-glucoside. Glutamate 394 functions as the Nucleophile in the catalytic mechanism. An N-linked (GlcNAc...) asparagine glycan is attached at asparagine 429. Residues tryptophan 439 and phenylalanine 455 each coordinate a beta-D-glucoside. N-linked (GlcNAc...) asparagine glycosylation is found at asparagine 461, asparagine 485, and asparagine 500.

Belongs to the glycosyl hydrolase 1 family.

It catalyses the reaction Hydrolysis of terminal, non-reducing beta-D-glucosyl residues with release of beta-D-glucose.. In Arabidopsis thaliana (Mouse-ear cress), this protein is Beta-glucosidase 3.